We begin with the raw amino-acid sequence, 354 residues long: Histidinol-phosphate aminotransferase (354 aa).

Lys-208 is modified (N6-(pyridoxal phosphate)lysine).

It belongs to the class-II pyridoxal-phosphate-dependent aminotransferase family. Histidinol-phosphate aminotransferase subfamily. As to quaternary structure, homodimer. The cofactor is pyridoxal 5'-phosphate.

The catalysed reaction is L-histidinol phosphate + 2-oxoglutarate = 3-(imidazol-4-yl)-2-oxopropyl phosphate + L-glutamate. It participates in amino-acid biosynthesis; L-histidine biosynthesis; L-histidine from 5-phospho-alpha-D-ribose 1-diphosphate: step 7/9. This chain is Histidinol-phosphate aminotransferase, found in Aquifex aeolicus (strain VF5).